Here is a 102-residue protein sequence, read N- to C-terminus: NADH-quinone oxidoreductase subunit K (102 aa).

3 consecutive transmembrane segments (helical) span residues 6–26, 30–50, and 63–83; these read LIGI…GVLA, MLFQ…GFIA, and MFIL…ALFL.

It belongs to the complex I subunit 4L family. In terms of assembly, NDH-1 is composed of 14 different subunits. Subunits NuoA, H, J, K, L, M, N constitute the membrane sector of the complex.

It is found in the cell inner membrane. It carries out the reaction a quinone + NADH + 5 H(+)(in) = a quinol + NAD(+) + 4 H(+)(out). Its function is as follows. NDH-1 shuttles electrons from NADH, via FMN and iron-sulfur (Fe-S) centers, to quinones in the respiratory chain. The immediate electron acceptor for the enzyme in this species is believed to be ubiquinone. Couples the redox reaction to proton translocation (for every two electrons transferred, four hydrogen ions are translocated across the cytoplasmic membrane), and thus conserves the redox energy in a proton gradient. The chain is NADH-quinone oxidoreductase subunit K from Rhodopseudomonas palustris (strain TIE-1).